Here is a 500-residue protein sequence, read N- to C-terminus: Probable glycine dehydrogenase (decarboxylating) subunit 2 (500 aa).

The segment at 1–25 is disordered; that stretch reads MLIFEHSRPGRRNYSQSPKAAEATD. K263 carries the N6-(pyridoxal phosphate)lysine modification.

Belongs to the GcvP family. C-terminal subunit subfamily. As to quaternary structure, the glycine cleavage system is composed of four proteins: P, T, L and H. In this organism, the P 'protein' is a heterodimer of two subunits. It depends on pyridoxal 5'-phosphate as a cofactor.

It catalyses the reaction N(6)-[(R)-lipoyl]-L-lysyl-[glycine-cleavage complex H protein] + glycine + H(+) = N(6)-[(R)-S(8)-aminomethyldihydrolipoyl]-L-lysyl-[glycine-cleavage complex H protein] + CO2. The glycine cleavage system catalyzes the degradation of glycine. The P protein binds the alpha-amino group of glycine through its pyridoxal phosphate cofactor; CO(2) is released and the remaining methylamine moiety is then transferred to the lipoamide cofactor of the H protein. The protein is Probable glycine dehydrogenase (decarboxylating) subunit 2 of Nitrosospira multiformis (strain ATCC 25196 / NCIMB 11849 / C 71).